Consider the following 479-residue polypeptide: MKKASELIFIPIPGIGHIVSTVEIAKLLLCRDDNLFITILIMKFPFTADGSDVYIKSLAVDPSLKTQRIRFVNLPQEHFQGTGATGFFTFIDSHKSHVKDAVTRLMETKSETTRIAGFVIDMFCTGMIDLANEFGLPSYVFYTSGAADLGLMFHLQALRDEENKDCTEFKDSDAELVVSSFVNPLPAARVLPSVVFEKEGGNFFLNFAKRYRETKGILVNTFLELEPHAIQSLSSDGKILPVYPVGPILNVKSEGNQVSSEKSKQKSDILEWLDDQPPSSVVFLCFGSMGCFGEDQVKEIAHALEQGGIRFLWSLRQPSKEKIGFPSDYTDYKAVLPEGFLDRTTDLGKVIGWAPQLAILAHPAVGGFVSHCGWNSTLESIWYGVPIATWPFYAEQQVNAFELVKELKLAVEIDMGYRKDSGVIVSRENIEKGIKEVMEQESELRKRVKEMSQMSRKALEEDGSSYSSLGRFLDQIQTS.

The active-site Proton acceptor is His17. Position 17 (His17) interacts with an anthocyanidin. Asp121 serves as the catalytic Charge relay. Residues Thr143, Ala354, Gln356, His371, Trp374, Asn375, Ser376, and Glu379 each contribute to the UDP-alpha-D-glucose site. An an anthocyanidin-binding site is contributed by Ala394. UDP-alpha-D-glucose contacts are provided by Glu395 and Gln396. The segment at Met454–Ser479 is disordered.

This sequence belongs to the UDP-glycosyltransferase family. In terms of tissue distribution, strongly expressed in achenes, with lower expression levels detected in receptacles.

The enzyme catalyses a flavonol + UDP-alpha-D-glucose = a flavonol 3-O-beta-D-glucoside + UDP + H(+). Its function is as follows. Broad spectrum multifunctional glucosyltransferase. Catalyzes the formation of flavonol 3-O-glucosides during fruit ripening. Accepted substrates include several flavonoids, hydroxycoumarins and beta-naphthols. Uses UDP-Glc as a sugar donor, but not UDP-Gal or UDP-GlcUA. May also be involved in detoxification of xenobiotics. The chain is UDP-glucose flavonoid 3-O-glucosyltransferase 6 from Fragaria ananassa (Strawberry).